A 162-amino-acid chain; its full sequence is MKKPFRIGFGFDVHRLSEGYPLWMGGVRLEHSKGLEGHSDADVLIHAICDALLGAAALRDIGYHFPPSDPQYKGIDSKILLARAMELVRSQGYELGNIDATIAAEQPKLNPHIPDMQRVLAEVIQVEVSDISLKATTTEKLGFTGREEGISAYAVALLIAAV.

The a divalent metal cation site is built by Asp-12 and His-14. 4-CDP-2-C-methyl-D-erythritol 2-phosphate-binding positions include 12–14 and 38–39; these read DVH and HS. His-46 provides a ligand contact to a divalent metal cation. 4-CDP-2-C-methyl-D-erythritol 2-phosphate-binding positions include 60 to 62, 136 to 139, Phe-143, and Arg-146; these read DIG and TTTE.

This sequence belongs to the IspF family. Homotrimer. It depends on a divalent metal cation as a cofactor.

It catalyses the reaction 4-CDP-2-C-methyl-D-erythritol 2-phosphate = 2-C-methyl-D-erythritol 2,4-cyclic diphosphate + CMP. The protein operates within isoprenoid biosynthesis; isopentenyl diphosphate biosynthesis via DXP pathway; isopentenyl diphosphate from 1-deoxy-D-xylulose 5-phosphate: step 4/6. Involved in the biosynthesis of isopentenyl diphosphate (IPP) and dimethylallyl diphosphate (DMAPP), two major building blocks of isoprenoid compounds. Catalyzes the conversion of 4-diphosphocytidyl-2-C-methyl-D-erythritol 2-phosphate (CDP-ME2P) to 2-C-methyl-D-erythritol 2,4-cyclodiphosphate (ME-CPP) with a corresponding release of cytidine 5-monophosphate (CMP). The polypeptide is 2-C-methyl-D-erythritol 2,4-cyclodiphosphate synthase (Porphyromonas gingivalis (strain ATCC 33277 / DSM 20709 / CIP 103683 / JCM 12257 / NCTC 11834 / 2561)).